A 482-amino-acid polypeptide reads, in one-letter code: Probable cytosol aminopeptidase (482 aa).

Mn(2+) contacts are provided by lysine 251 and aspartate 256. The active site involves lysine 263. 3 residues coordinate Mn(2+): aspartate 274, aspartate 333, and glutamate 335. Arginine 337 is an active-site residue.

Belongs to the peptidase M17 family. The cofactor is Mn(2+).

The protein localises to the cytoplasm. It catalyses the reaction Release of an N-terminal amino acid, Xaa-|-Yaa-, in which Xaa is preferably Leu, but may be other amino acids including Pro although not Arg or Lys, and Yaa may be Pro. Amino acid amides and methyl esters are also readily hydrolyzed, but rates on arylamides are exceedingly low.. It carries out the reaction Release of an N-terminal amino acid, preferentially leucine, but not glutamic or aspartic acids.. Functionally, presumably involved in the processing and regular turnover of intracellular proteins. Catalyzes the removal of unsubstituted N-terminal amino acids from various peptides. This Acinetobacter baylyi (strain ATCC 33305 / BD413 / ADP1) protein is Probable cytosol aminopeptidase.